Here is a 297-residue protein sequence, read N- to C-terminus: Acetaldehyde dehydrogenase (297 aa).

An NAD(+)-binding site is contributed by 15 to 18; that stretch reads SGSI. Residue C130 is the Acyl-thioester intermediate of the active site. Residues 162–170 and N272 contribute to the NAD(+) site; that span reads SAGIATREN.

Belongs to the acetaldehyde dehydrogenase family.

It carries out the reaction acetaldehyde + NAD(+) + CoA = acetyl-CoA + NADH + H(+). The sequence is that of Acetaldehyde dehydrogenase (mhpF) from Burkholderia pseudomallei (strain K96243).